Reading from the N-terminus, the 559-residue chain is Chaperonin GroEL 3 (559 aa).

ATP-binding positions include 88–92 (DGTTT), Gly-426, and Asp-507.

This sequence belongs to the chaperonin (HSP60) family. In terms of assembly, forms a cylinder of 14 subunits composed of two heptameric rings stacked back-to-back. Interacts with the co-chaperonin GroES.

The protein localises to the cytoplasm. It catalyses the reaction ATP + H2O + a folded polypeptide = ADP + phosphate + an unfolded polypeptide.. Its function is as follows. Together with its co-chaperonin GroES, plays an essential role in assisting protein folding. The GroEL-GroES system forms a nano-cage that allows encapsulation of the non-native substrate proteins and provides a physical environment optimized to promote and accelerate protein folding. This chain is Chaperonin GroEL 3, found in Methylococcus capsulatus (strain ATCC 33009 / NCIMB 11132 / Bath).